A 415-amino-acid polypeptide reads, in one-letter code: tRNA(Met) cytidine acetate ligase (415 aa).

ATP-binding positions include 7-20 (VVEYNPFHNGHRYH), Gly101, Asn162, and 187-188 (RI).

The protein belongs to the TmcAL family.

It is found in the cytoplasm. It carries out the reaction cytidine(34) in elongator tRNA(Met) + acetate + ATP = N(4)-acetylcytidine(34) in elongator tRNA(Met) + AMP + diphosphate. In terms of biological role, catalyzes the formation of N(4)-acetylcytidine (ac(4)C) at the wobble position of elongator tRNA(Met), using acetate and ATP as substrates. First activates an acetate ion to form acetyladenylate (Ac-AMP) and then transfers the acetyl group to tRNA to form ac(4)C34. In Bacillus velezensis (strain DSM 23117 / BGSC 10A6 / LMG 26770 / FZB42) (Bacillus amyloliquefaciens subsp. plantarum), this protein is tRNA(Met) cytidine acetate ligase.